A 55-amino-acid chain; its full sequence is ATP synthase protein 8 (55 aa).

The chain crosses the membrane as a helical span at residues 8 to 28 (WWIVNFSLIWASVLIVISLLL). The disordered stretch occupies residues 34–55 (NSAGQSSSSLTLNKTTTNWQWL). Positions 39–55 (SSSSLTLNKTTTNWQWL) are enriched in low complexity.

Belongs to the ATPase protein 8 family. In terms of assembly, F-type ATPases have 2 components, CF(1) - the catalytic core - and CF(0) - the membrane proton channel.

It is found in the mitochondrion membrane. Functionally, mitochondrial membrane ATP synthase (F(1)F(0) ATP synthase or Complex V) produces ATP from ADP in the presence of a proton gradient across the membrane which is generated by electron transport complexes of the respiratory chain. F-type ATPases consist of two structural domains, F(1) - containing the extramembraneous catalytic core and F(0) - containing the membrane proton channel, linked together by a central stalk and a peripheral stalk. During catalysis, ATP synthesis in the catalytic domain of F(1) is coupled via a rotary mechanism of the central stalk subunits to proton translocation. Part of the complex F(0) domain. Minor subunit located with subunit a in the membrane. The chain is ATP synthase protein 8 (MT-ATP8) from Strongylocentrotus purpuratus (Purple sea urchin).